The sequence spans 695 residues: Probable rhamnogalacturonate lyase C (695 aa).

A signal peptide spans 1–21 (MFLPSRKALAFLACLASHSVA). Asn-28, Asn-96, Asn-118, Asn-144, Asn-199, Asn-285, Asn-532, and Asn-638 each carry an N-linked (GlcNAc...) asparagine glycan.

Belongs to the polysaccharide lyase 4 family.

It is found in the secreted. It carries out the reaction Endotype eliminative cleavage of L-alpha-rhamnopyranosyl-(1-&gt;4)-alpha-D-galactopyranosyluronic acid bonds of rhamnogalacturonan I domains in ramified hairy regions of pectin leaving L-rhamnopyranose at the reducing end and 4-deoxy-4,5-unsaturated D-galactopyranosyluronic acid at the non-reducing end.. Functionally, pectinolytic enzymes consist of four classes of enzymes: pectin lyase, polygalacturonase, pectin methylesterase and rhamnogalacturonase. Degrades the rhamnogalacturonan I (RG-I) backbone of pectin. The sequence is that of Probable rhamnogalacturonate lyase C (rglC) from Aspergillus oryzae (strain ATCC 42149 / RIB 40) (Yellow koji mold).